Here is a 1303-residue protein sequence, read N- to C-terminus: Protein STU1 (1303 aa).

Disordered stretches follow at residues 239 to 259 (RGSD…NTPV), 531 to 664 (SQRE…GAVS), and 953 to 977 (EASD…NSEH). Over residues 249 to 259 (RANTPRSNTPV) the composition is skewed to polar residues. The span at 554 to 568 (SLKEAILEKNKELRQ) shows a compositional bias: basic and acidic residues. Over residues 573 to 583 (SRNSGEQSTKI) the composition is skewed to polar residues. Residues 596–609 (SRLEKSLLRPDVGH) show a composition bias toward basic and acidic residues. Over residues 618–629 (SSWTYPSTQSGP) the composition is skewed to polar residues. Basic and acidic residues predominate over residues 634–648 (KQRERSKTEVHKKSP). 2 stretches are compositionally biased toward polar residues: residues 653-664 (RPSSRLDTGAVS) and 955-972 (SDSS…SSKR).

Belongs to the CLASP family. Interacts with microtubules.

Its subcellular location is the cytoplasm. It localises to the cytoskeleton. The protein localises to the nucleus. The protein resides in the spindle. In terms of biological role, microtubule binding protein that promotes the stabilization of dynamic microtubules. Required for mitotic spindle formation. This is Protein STU1 (STU1) from Candida albicans (strain SC5314 / ATCC MYA-2876) (Yeast).